Consider the following 297-residue polypeptide: HTH-type transcriptional regulator ArgP (297 aa).

The HTH lysR-type domain maps to 4-60 (PDYRTLQALDAVIRERGFERAAQKLCITQSAVSQRIKQLENLFGQPLLVRTVPPRPT). Residues 21–40 (FERAAQKLCITQSAVSQRIK) constitute a DNA-binding region (H-T-H motif).

The protein belongs to the LysR transcriptional regulatory family. Homodimer.

Its function is as follows. Controls the transcription of genes involved in arginine and lysine metabolism. This is HTH-type transcriptional regulator ArgP from Yersinia enterocolitica serotype O:8 / biotype 1B (strain NCTC 13174 / 8081).